Consider the following 144-residue polypeptide: Glycine-rich protein HC1 (144 aa).

A helical membrane pass occupies residues 5–25 (IFLLLGLSIAFAILISSEVAA). A run of 11 repeats spans residues 37–42 (GYNNGG), 43–48 (GYHNGG), 50–55 (GYNNGG), 56–61 (GYHNGG), 63–68 (GYNNGG), 69–74 (GYHNGG), 76–81 (GYNNGG), 82–87 (GYHNGG), 89–94 (GYNNGG), 102–107 (GYNNGG), and 108–113 (GYHGGG). Residues 37 to 113 (GYNNGGGYHN…NNGGGYHGGG (77 aa)) form an 11 X 6 AA tandem repeats of G-Y-[NH]-N-G -G region.

It belongs to the GRP family.

The protein localises to the membrane. This is Glycine-rich protein HC1 from Oxybasis rubra (Red goosefoot).